Reading from the N-terminus, the 761-residue chain is Zinc finger protein 711 (761 aa).

5 consecutive C2H2-type zinc fingers follow at residues 383–408 (YPCH…HPDH), 414–436 (YQCT…LESH), 476–499 (HKCK…LAVH), 505–527 (HVCV…MRTH), and 533–556 (FHCQ…KSKH). The C2H2-type 6; atypical zinc finger occupies 562–584 (FKCGHCPQAFADDKELQRHAEIF). Cys564, Cys567, and His580 together coordinate Zn(2+). 6 consecutive C2H2-type zinc fingers follow at residues 590–613 (HQCP…ISVH), 619–641 (HKCD…SETH), 647–670 (HQCR…LSVH), 676–698 (FKCK…MKTH), 704–727 (YQCQ…ISIH), and 733–755 (HRCD…IMRH).

It belongs to the krueppel C2H2-type zinc-finger protein family. Present in ovary and brain but not in other tissues (at protein level).

It is found in the nucleus. Its subcellular location is the cytoplasm. Transcription regulator required for brain development. Probably acts as a transcription factor that binds to the promoter of target genes, leading to activate their expression. In Danio rerio (Zebrafish), this protein is Zinc finger protein 711 (znf711).